Consider the following 2248-residue polypeptide: Zinc finger protein 407 (2248 aa).

Over residues 1 to 32 (MMDSENKPENDEDEKINKEAQDLTKLSSHNED) the composition is skewed to basic and acidic residues. Residues 1–84 (MMDSENKPEN…RRKLDEAEPL (84 aa)) are disordered. 3 C2H2-type zinc fingers span residues 186–208 (LKCS…AESH), 215–238 (HTCC…KQAH), and 244–268 (FSCD…GKTH). Disordered stretches follow at residues 291 to 322 (KKSR…GLRN) and 494 to 515 (SETQ…GLHS). A compositionally biased stretch (polar residues) spans 494–504 (SETQEAEQGQG). 3 consecutive C2H2-type zinc fingers follow at residues 528-551 (CACT…KRCH), 557-581 (FYCR…SNQH), and 615-639 (FLCT…TEKH). Residues 667–700 (ESENAKESMDDSGKASQEEPLKSRVSHGNEVRHS) form a disordered region. Basic and acidic residues predominate over residues 669 to 699 (ENAKESMDDSGKASQEEPLKSRVSHGNEVRH). Residues 705–728 (FQCKKCFYKTRSSTVLTRHIKLRH) form a C2H2-type 7 zinc finger. The tract at residues 821 to 847 (LSQSGGSTKDDELASTTTPKRGRPKGN) is disordered. C2H2-type zinc fingers lie at residues 850–873 (RTCS…RRKH) and 879–903 (YLCK…TKKH). The segment at 910–962 (EASGKHSSDIIVGPEGGSLEAGKKNAGSAVTMSDEHANKPAESPTSVLEKPDR) is disordered. 2 consecutive C2H2-type zinc fingers follow at residues 1017–1040 (NKCL…KRKH) and 1046–1070 (FYCM…TEKH). Ser-1262 carries the post-translational modification Phosphoserine. C2H2-type zinc fingers lie at residues 1444-1468 (FHCL…SAGH) and 1486-1509 (FKCV…KGQH). The C2H2-type 14; degenerate zinc-finger motif lies at 1537–1561 (NVCKYCGKMCRSSNSMAFLAHIRTH). 8 C2H2-type zinc fingers span residues 1567–1589 (FKCK…VKRH), 1595–1618 (YKCH…LGKH), 1628–1650 (FTCH…MKLH), 1656–1680 (FKCT…YRTH), 1686–1708 (FLCD…RRQH), 1714–1736 (FKCD…KRVH), 1742–1767 (YRCP…TGKH), and 1773–1796 (YNCP…KEQH).

It localises to the nucleus. May be involved in transcriptional regulation. The chain is Zinc finger protein 407 (ZNF407) from Homo sapiens (Human).